We begin with the raw amino-acid sequence, 211 residues long: Large ribosomal subunit protein uL3 (211 aa).

Residue glutamine 150 is modified to N5-methylglutamine.

This sequence belongs to the universal ribosomal protein uL3 family. As to quaternary structure, part of the 50S ribosomal subunit. Forms a cluster with proteins L14 and L19. Post-translationally, methylated by PrmB.

In terms of biological role, one of the primary rRNA binding proteins, it binds directly near the 3'-end of the 23S rRNA, where it nucleates assembly of the 50S subunit. The polypeptide is Large ribosomal subunit protein uL3 (Pseudomonas aeruginosa (strain LESB58)).